A 189-amino-acid polypeptide reads, in one-letter code: MDKHGVKTPLWRKEVEDPEAREEDLEDDSSSSSSSSSVEERSDPESATETEEDSRDAEEREARSVSYSPLRQESSSQQVALLRRSDSSFWGWLSPFALLGGLAAPADRKRGAPEEPCVLETRRRPPRRGGCARCEILFCKKCKTLHSHPAYVEHCILEHPDLGKAEATGNSELIDSQPPSPQCSKLFYL.

Residues 1 to 15 (MDKHGVKTPLWRKEV) are compositionally biased toward basic and acidic residues. A disordered region spans residues 1 to 77 (MDKHGVKTPL…SPLRQESSSQ (77 aa)). 2 stretches are compositionally biased toward acidic residues: residues 16–29 (EDPE…EDDS) and 46–56 (SATETEEDSRD). The span at 65–77 (VSYSPLRQESSSQ) shows a compositional bias: polar residues.

This is an uncharacterized protein from Mus musculus (Mouse).